A 122-amino-acid polypeptide reads, in one-letter code: Immunoglobulin lambda variable 4-3 (122 aa).

The N-terminal stretch at 1-19 (MAWVSFYLLPFIFSTGLCA) is a signal peptide. Residues 20–44 (LPVLTQPPSASALLGASIKLTCTLS) form a framework-1 region. The 102-residue stretch at 21-122 (PVLTQPPSAS…ESHTIDGQVG (102 aa)) folds into the Ig-like domain. Cys-41 and Cys-111 are joined by a disulfide. The tract at residues 45–51 (SEHSTYT) is complementarity-determining-1. Residues 52–68 (IEWYQQRPGRSPQYIMK) form a framework-2 region. A complementarity-determining-2 region spans residues 69 to 75 (VKSDGSH). Residues 76–111 (SKGDGIPDRFMGSSSGADRYLTFSNLQSDDEAEYHC) are framework-3. The interval 112 to 122 (GESHTIDGQVG) is complementarity-determining-3.

As to quaternary structure, immunoglobulins are composed of two identical heavy chains and two identical light chains; disulfide-linked.

The protein localises to the secreted. It is found in the cell membrane. In terms of biological role, v region of the variable domain of immunoglobulin light chains that participates in the antigen recognition. Immunoglobulins, also known as antibodies, are membrane-bound or secreted glycoproteins produced by B lymphocytes. In the recognition phase of humoral immunity, the membrane-bound immunoglobulins serve as receptors which, upon binding of a specific antigen, trigger the clonal expansion and differentiation of B lymphocytes into immunoglobulins-secreting plasma cells. Secreted immunoglobulins mediate the effector phase of humoral immunity, which results in the elimination of bound antigens. The antigen binding site is formed by the variable domain of one heavy chain, together with that of its associated light chain. Thus, each immunoglobulin has two antigen binding sites with remarkable affinity for a particular antigen. The variable domains are assembled by a process called V-(D)-J rearrangement and can then be subjected to somatic hypermutations which, after exposure to antigen and selection, allow affinity maturation for a particular antigen. This chain is Immunoglobulin lambda variable 4-3, found in Homo sapiens (Human).